The following is an 807-amino-acid chain: Glycerol-3-phosphate acyltransferase (807 aa).

Residues 305 to 310 (CHRSHM) carry the HXXXXD motif motif.

This sequence belongs to the GPAT/DAPAT family.

It is found in the cell inner membrane. It catalyses the reaction sn-glycerol 3-phosphate + an acyl-CoA = a 1-acyl-sn-glycero-3-phosphate + CoA. It functions in the pathway phospholipid metabolism; CDP-diacylglycerol biosynthesis; CDP-diacylglycerol from sn-glycerol 3-phosphate: step 1/3. This Aliivibrio fischeri (strain MJ11) (Vibrio fischeri) protein is Glycerol-3-phosphate acyltransferase.